Here is a 134-residue protein sequence, read N- to C-terminus: ATP synthase epsilon chain (134 aa).

The protein belongs to the ATPase epsilon chain family. As to quaternary structure, F-type ATPases have 2 components, CF(1) - the catalytic core - and CF(0) - the membrane proton channel. CF(1) has five subunits: alpha(3), beta(3), gamma(1), delta(1), epsilon(1). CF(0) has three main subunits: a, b and c.

The protein resides in the cell inner membrane. Functionally, produces ATP from ADP in the presence of a proton gradient across the membrane. The sequence is that of ATP synthase epsilon chain from Nitratidesulfovibrio vulgaris (strain DSM 19637 / Miyazaki F) (Desulfovibrio vulgaris).